We begin with the raw amino-acid sequence, 421 residues long: MNIVNLISKKQRGKALTETEINWFVHSVNNKSLADYQVSAFLMAVWFQGMNSKELFCLTKAMVKSGESLHFNHHSKLSVDKHSTGGIGDKVSIALIPILTALDYSVAKLSGRGLGYTGGTIDKLEAVGVKTDFTPTEAQNLLDQNDCFIIGQSEGIAPVDKVLYALRDTTATVDSLPLIASSVMSKKLAINNDYIFIDLKYGKGAFCKTKTMAKELAQYMYSIAKQFKRKLYIKLSDMNQVLGKTIGNALEVLEVVHFLKRNWTEVGADFIQLMEQIVTEILIETKRAPNKRAAVALYHATLEGEKPWQRFLKFIELQGSSWERFLDLKELFNPQYKAPVLASQSGTLSYTSPVDLAMVSISLGAGRMVKTDLIDPMAGIKLVKQANEVVKAGDTVLELYSSKPITPAHIEAAQHTIIIKQ.

Belongs to the thymidine/pyrimidine-nucleoside phosphorylase family. Homodimer.

It carries out the reaction thymidine + phosphate = 2-deoxy-alpha-D-ribose 1-phosphate + thymine. The enzymes which catalyze the reversible phosphorolysis of pyrimidine nucleosides are involved in the degradation of these compounds and in their utilization as carbon and energy sources, or in the rescue of pyrimidine bases for nucleotide synthesis. In Mycoplasma pneumoniae (strain ATCC 29342 / M129 / Subtype 1) (Mycoplasmoides pneumoniae), this protein is Thymidine phosphorylase (deoA).